Here is a 359-residue protein sequence, read N- to C-terminus: Probable dual-specificity RNA methyltransferase RlmN (359 aa).

E93 functions as the Proton acceptor in the catalytic mechanism. The Radical SAM core domain maps to 107 to 337 (KSERVTLCVS…VTMRYEKGHD (231 aa)). An intrachain disulfide couples C114 to C342. [4Fe-4S] cluster is bound by residues C121, C125, and C128. S-adenosyl-L-methionine is bound by residues 168 to 169 (GE), S200, 223 to 225 (SLH), and N299. C342 functions as the S-methylcysteine intermediate in the catalytic mechanism.

This sequence belongs to the radical SAM superfamily. RlmN family. It depends on [4Fe-4S] cluster as a cofactor.

It is found in the cytoplasm. The catalysed reaction is adenosine(2503) in 23S rRNA + 2 reduced [2Fe-2S]-[ferredoxin] + 2 S-adenosyl-L-methionine = 2-methyladenosine(2503) in 23S rRNA + 5'-deoxyadenosine + L-methionine + 2 oxidized [2Fe-2S]-[ferredoxin] + S-adenosyl-L-homocysteine. The enzyme catalyses adenosine(37) in tRNA + 2 reduced [2Fe-2S]-[ferredoxin] + 2 S-adenosyl-L-methionine = 2-methyladenosine(37) in tRNA + 5'-deoxyadenosine + L-methionine + 2 oxidized [2Fe-2S]-[ferredoxin] + S-adenosyl-L-homocysteine. Specifically methylates position 2 of adenine 2503 in 23S rRNA and position 2 of adenine 37 in tRNAs. The sequence is that of Probable dual-specificity RNA methyltransferase RlmN from Akkermansia muciniphila (strain ATCC BAA-835 / DSM 22959 / JCM 33894 / BCRC 81048 / CCUG 64013 / CIP 107961 / Muc).